Here is a 77-residue protein sequence, read N- to C-terminus: Conodipine-M alpha chain (77 aa).

Residue glutamine 1 is modified to Pyrrolidone carboxylic acid. Histidine 36 is a catalytic residue.

As to quaternary structure, heterodimer of an alpha and a beta chains; probably disulfide-linked. Ca(2+) is required as a cofactor. In terms of tissue distribution, expressed by the venom duct.

Its subcellular location is the secreted. It catalyses the reaction a 1,2-diacyl-sn-glycero-3-phosphocholine + H2O = a 1-acyl-sn-glycero-3-phosphocholine + a fatty acid + H(+). Its activity is regulated as follows. Inhibited by linoleoyl amide and MG14. Heterodimer: conodipine-M catalyzes the calcium-dependent hydrolysis of the 2-acyl groups in 3-sn-phosphoglycerides. This activity may be supported by the alpha chain. Conodipine-M inhibits the binding of isradipine (a ligand specific for L-type calcium channel) to L-type calcium channels. This chain is Conodipine-M alpha chain, found in Conus magus (Magical cone).